The sequence spans 120 residues: Flagellar protein FliT (120 aa).

The required for homodimerization stretch occupies residues 1–50 (MNDFISSLNNWQALYALSNTMLSLANSGQWDELIEQEVKYVTLVEAIARN). The tract at residues 59–97 (FQEKARELLTKVLANEAALKIKLQARMEELRVLIEQNGN) is fliD binding.

This sequence belongs to the FliT family. As to quaternary structure, homodimer. Interacts with FliD and FlhC.

It is found in the cytoplasm. Its subcellular location is the cytosol. Functionally, dual-function protein that regulates the transcription of class 2 flagellar operons and that also acts as an export chaperone for the filament-capping protein FliD. As a transcriptional regulator, acts as an anti-FlhDC factor; it directly binds FlhC, thus inhibiting the binding of the FlhC/FlhD complex to class 2 promoters, resulting in decreased expression of class 2 flagellar operons. As a chaperone, effects FliD transition to the membrane by preventing its premature polymerization, and by directing it to the export apparatus. This is Flagellar protein FliT from Cronobacter sakazakii (strain ATCC BAA-894) (Enterobacter sakazakii).